We begin with the raw amino-acid sequence, 149 residues long: Large ribosomal subunit protein bL9 (149 aa).

It belongs to the bacterial ribosomal protein bL9 family.

Its function is as follows. Binds to the 23S rRNA. The chain is Large ribosomal subunit protein bL9 from Histophilus somni (strain 129Pt) (Haemophilus somnus).